The primary structure comprises 370 residues: MKVKEQLFSLNAYVPGKNIEEVKREYGLSKIVKLASNENPFGCSKRVKEALALLNEQYALYPDGAAFELRQKVANHLKVQPEQLLFGSGLDEVIQMISRALLHKGTNVVMARPTFSQYRHHAIIEGAEVREVPLKDGIHDLDAMLEQVDYNTRIVWVCNPNNPTGTYVEKQKLLSFLENVPKSSLVIMDEAYYEYAGAEDYPQTLPLLEKYENLMVLRTFSKAYGLAAFRIGYAVGYAELIKKLEVARLPFNTSTVAQVVASVAIDDQSFLQECVKKNAEGLEQYYQFCKEYDVFYYPSQTNFIFLKIGLPGNEVFERLMKKGYIVRSGAPFGLLDGIRITVGLKEENAEIIALLANLVKEHVKKEETYS.

Lys222 is modified (N6-(pyridoxal phosphate)lysine).

It belongs to the class-II pyridoxal-phosphate-dependent aminotransferase family. Histidinol-phosphate aminotransferase subfamily. As to quaternary structure, homodimer. It depends on pyridoxal 5'-phosphate as a cofactor.

It catalyses the reaction L-histidinol phosphate + 2-oxoglutarate = 3-(imidazol-4-yl)-2-oxopropyl phosphate + L-glutamate. Its pathway is amino-acid biosynthesis; L-histidine biosynthesis; L-histidine from 5-phospho-alpha-D-ribose 1-diphosphate: step 7/9. The polypeptide is Histidinol-phosphate aminotransferase (Bacillus cytotoxicus (strain DSM 22905 / CIP 110041 / 391-98 / NVH 391-98)).